The sequence spans 146 residues: ATP synthase epsilon chain (146 aa).

It belongs to the ATPase epsilon chain family. In terms of assembly, F-type ATPases have 2 components, CF(1) - the catalytic core - and CF(0) - the membrane proton channel. CF(1) has five subunits: alpha(3), beta(3), gamma(1), delta(1), epsilon(1). CF(0) has three main subunits: a, b and c.

It localises to the cell inner membrane. Produces ATP from ADP in the presence of a proton gradient across the membrane. In Rhodospirillum centenum (strain ATCC 51521 / SW), this protein is ATP synthase epsilon chain.